A 1093-amino-acid polypeptide reads, in one-letter code: NACHT, LRR and PYD domains-containing protein 14 (1093 aa).

Positions 1–97 (MADSSSSSFF…CERAKEEINW (97 aa)) constitute a Pyrin domain. The disordered stretch occupies residues 102–121 (IGPDDAKAGETQEDQEAVLG). The 323-residue stretch at 177-499 (QIVVLQGAAG…MFYMLKGSWE (323 aa)) folds into the NACHT domain. 183–190 (GAAGVGKT) contacts ATP. 11 LRR repeats span residues 730-750 (NLMH…KSLC), 759-780 (KLQT…NISN), 787-807 (SLIF…QLLC), 816-836 (YLER…EYLS), 844-864 (RLTH…KLMS), 873-894 (TLKS…YLST), 901-921 (SLTH…KLLC), 930-951 (NLQD…DLAS), 958-978 (NLRS…KILC), 987-1008 (NIQR…DLSS), and 1015-1035 (RLIK…VKLY).

The protein belongs to the NLRP family. Testis-specific.

Its subcellular location is the cytoplasm. May be involved in inflammation and spermatogenesis. The chain is NACHT, LRR and PYD domains-containing protein 14 (NLRP14) from Homo sapiens (Human).